Here is a 194-residue protein sequence, read N- to C-terminus: Holliday junction branch migration complex subunit RuvA (194 aa).

Residues 1–62 (MIGYLKGNVI…EDSLDLYGFK (62 aa)) are domain I. The segment at 63 to 136 (TMEERELFET…KGKLKDMSGD (74 aa)) is domain II. The interval 136–140 (DFEEP) is flexible linker. Residues 141–194 (LPDNRNTELSDALASLGYSELEIEEALSNADIKNNGSLEENIKKALGYLGSKGS) form a domain III region.

Belongs to the RuvA family. In terms of assembly, homotetramer. Forms an RuvA(8)-RuvB(12)-Holliday junction (HJ) complex. HJ DNA is sandwiched between 2 RuvA tetramers; dsDNA enters through RuvA and exits via RuvB. An RuvB hexamer assembles on each DNA strand where it exits the tetramer. Each RuvB hexamer is contacted by two RuvA subunits (via domain III) on 2 adjacent RuvB subunits; this complex drives branch migration. In the full resolvosome a probable DNA-RuvA(4)-RuvB(12)-RuvC(2) complex forms which resolves the HJ.

It localises to the cytoplasm. The RuvA-RuvB-RuvC complex processes Holliday junction (HJ) DNA during genetic recombination and DNA repair, while the RuvA-RuvB complex plays an important role in the rescue of blocked DNA replication forks via replication fork reversal (RFR). RuvA specifically binds to HJ cruciform DNA, conferring on it an open structure. The RuvB hexamer acts as an ATP-dependent pump, pulling dsDNA into and through the RuvAB complex. HJ branch migration allows RuvC to scan DNA until it finds its consensus sequence, where it cleaves and resolves the cruciform DNA. In Halothermothrix orenii (strain H 168 / OCM 544 / DSM 9562), this protein is Holliday junction branch migration complex subunit RuvA.